We begin with the raw amino-acid sequence, 122 residues long: Large ribosomal subunit protein uL14c (122 aa).

Belongs to the universal ribosomal protein uL14 family. In terms of assembly, part of the 50S ribosomal subunit.

Its subcellular location is the plastid. It is found in the chloroplast. In terms of biological role, binds to 23S rRNA. This Pleurastrum terricola (Filamentous green alga) protein is Large ribosomal subunit protein uL14c.